The chain runs to 367 residues: Alanine racemase (367 aa).

The active-site Proton acceptor; specific for D-alanine is the K35. K35 is modified (N6-(pyridoxal phosphate)lysine). A substrate-binding site is contributed by R130. Y259 functions as the Proton acceptor; specific for L-alanine in the catalytic mechanism. Residue M307 coordinates substrate.

It belongs to the alanine racemase family. Requires pyridoxal 5'-phosphate as cofactor.

The catalysed reaction is L-alanine = D-alanine. It participates in amino-acid biosynthesis; D-alanine biosynthesis; D-alanine from L-alanine: step 1/1. Its function is as follows. Catalyzes the interconversion of L-alanine and D-alanine. May also act on other amino acids. The sequence is that of Alanine racemase (alr) from Delftia acidovorans (strain DSM 14801 / SPH-1).